A 944-amino-acid chain; its full sequence is ATP-dependent helicase fft1 (944 aa).

Disordered stretches follow at residues 89 to 109 (AAYD…ESSN) and 174 to 246 (SAQK…NSIP). Positions 92–108 (DPHDQPPERDVSLKESS) are enriched in basic and acidic residues. Residues 174-184 (SAQKLNNQPIE) show a composition bias toward polar residues. The segment covering 186–203 (SSVDKENAKRKRYVEEGT) has biased composition (basic and acidic residues). A compositionally biased stretch (acidic residues) spans 217–227 (LSDEETNEDDL). The span at 230 to 246 (QSPTACTTDANIDNSIP) shows a compositional bias: polar residues. The Helicase ATP-binding domain maps to 426–592 (CLMYKAKLSG…ISLLAFMLPK (167 aa)). 439 to 446 (DEMGLGKT) is a binding site for ATP. Positions 543–546 (DEGH) match the DEGH box motif. The region spanning 766-923 (KVKKLCSLLK…DSEKIQKEIS (158 aa)) is the Helicase C-terminal domain.

This sequence belongs to the SNF2/RAD54 helicase family.

The protein resides in the nucleus. It carries out the reaction ATP + H2O = ADP + phosphate + H(+). Functionally, DNA helicase that possesses intrinsic ATP-dependent nucleosome-remodeling activity and is required for heterochromatin organization. In Schizosaccharomyces pombe (strain 972 / ATCC 24843) (Fission yeast), this protein is ATP-dependent helicase fft1 (fft1).